The sequence spans 44 residues: Cytochrome b559 subunit beta (44 aa).

The chain crosses the membrane as a helical span at residues 19 to 35 (WLAVHTLAVPTVFFIGA). Residue histidine 23 coordinates heme.

Belongs to the PsbE/PsbF family. Heterodimer of an alpha subunit and a beta subunit. PSII is composed of 1 copy each of membrane proteins PsbA, PsbB, PsbC, PsbD, PsbE, PsbF, PsbH, PsbI, PsbJ, PsbK, PsbL, PsbM, PsbT, PsbX, PsbY, PsbZ, Psb30/Ycf12, peripheral proteins PsbO, CyanoQ (PsbQ), PsbU, PsbV and a large number of cofactors. It forms dimeric complexes. Heme b serves as cofactor.

The protein localises to the cellular thylakoid membrane. Functionally, this b-type cytochrome is tightly associated with the reaction center of photosystem II (PSII). PSII is a light-driven water:plastoquinone oxidoreductase that uses light energy to abstract electrons from H(2)O, generating O(2) and a proton gradient subsequently used for ATP formation. It consists of a core antenna complex that captures photons, and an electron transfer chain that converts photonic excitation into a charge separation. The chain is Cytochrome b559 subunit beta from Gloeothece citriformis (strain PCC 7424) (Cyanothece sp. (strain PCC 7424)).